The primary structure comprises 616 residues: Glutamine--fructose-6-phosphate aminotransferase [isomerizing] (616 aa).

C2 (nucleophile; for GATase activity) is an active-site residue. Residues 2-221 (CGIVGYVGTD…QDQIVTITPE (220 aa)) enclose the Glutamine amidotransferase type-2 domain. 2 SIS domains span residues 288-428 (LGDE…VRGT) and 461-606 (LAHW…VDQP). Residue K611 is the For Fru-6P isomerization activity of the active site.

As to quaternary structure, homodimer.

The protein localises to the cytoplasm. The catalysed reaction is D-fructose 6-phosphate + L-glutamine = D-glucosamine 6-phosphate + L-glutamate. Functionally, catalyzes the first step in hexosamine metabolism, converting fructose-6P into glucosamine-6P using glutamine as a nitrogen source. The polypeptide is Glutamine--fructose-6-phosphate aminotransferase [isomerizing] (Leifsonia xyli subsp. xyli (strain CTCB07)).